A 348-amino-acid chain; its full sequence is Major outer membrane protein P.IB (348 aa).

The signal sequence occupies residues 1-19; sequence MKKSLIALTLAALPVAATA.

It belongs to the Gram-negative porin family. As to quaternary structure, homotrimer.

Its subcellular location is the cell outer membrane. Its function is as follows. Serves as a slightly cation selective porin. Major antigen on the gonococcal cell surface and it may have pathogenic properties in addition to its porin activity. This Neisseria gonorrhoeae protein is Major outer membrane protein P.IB (porB).